A 545-amino-acid chain; its full sequence is Glucose-6-phosphate isomerase (545 aa).

E351 functions as the Proton donor in the catalytic mechanism. Residues H382 and K510 contribute to the active site.

The protein belongs to the GPI family.

Its subcellular location is the cytoplasm. The enzyme catalyses alpha-D-glucose 6-phosphate = beta-D-fructose 6-phosphate. It participates in carbohydrate biosynthesis; gluconeogenesis. The protein operates within carbohydrate degradation; glycolysis; D-glyceraldehyde 3-phosphate and glycerone phosphate from D-glucose: step 2/4. Its function is as follows. Catalyzes the reversible isomerization of glucose-6-phosphate to fructose-6-phosphate. In Shewanella loihica (strain ATCC BAA-1088 / PV-4), this protein is Glucose-6-phosphate isomerase.